The chain runs to 409 residues: Rho-GTPase-activating protein BAG7 (409 aa).

The span at 1-26 shows a compositional bias: polar residues; sequence MFNMNLLSTPSSEEGSPQNRSSSMSS. The tract at residues 1–32 is disordered; the sequence is MFNMNLLSTPSSEEGSPQNRSSSMSSVEGKKD. Positions 50-257 constitute a Rho-GAP domain; the sequence is VSLEESLKVA…FLILHASDII (208 aa). Residues 362–409 are disordered; the sequence is KLLGNVGNSSNTGIKDPTERVPRGEHKTKHKQRQSWLRRLTSPSRTQP. Residues 377-386 show a composition bias toward basic and acidic residues; sequence DPTERVPRGE.

As to quaternary structure, interacts with RHO1.

In terms of biological role, acts in signal transduction. Activates RHO1. The protein is Rho-GTPase-activating protein BAG7 (BAG7) of Saccharomyces cerevisiae (strain ATCC 204508 / S288c) (Baker's yeast).